A 405-amino-acid chain; its full sequence is NADH-quinone oxidoreductase subunit D (405 aa).

It belongs to the complex I 49 kDa subunit family. As to quaternary structure, NDH-1 is composed of 14 different subunits. Subunits NuoB, C, D, E, F, and G constitute the peripheral sector of the complex.

The protein localises to the cell inner membrane. The catalysed reaction is a quinone + NADH + 5 H(+)(in) = a quinol + NAD(+) + 4 H(+)(out). Its function is as follows. NDH-1 shuttles electrons from NADH, via FMN and iron-sulfur (Fe-S) centers, to quinones in the respiratory chain. The immediate electron acceptor for the enzyme in this species is believed to be ubiquinone. Couples the redox reaction to proton translocation (for every two electrons transferred, four hydrogen ions are translocated across the cytoplasmic membrane), and thus conserves the redox energy in a proton gradient. The polypeptide is NADH-quinone oxidoreductase subunit D (Leptospira borgpetersenii serovar Hardjo-bovis (strain L550)).